We begin with the raw amino-acid sequence, 417 residues long: MLKREMNIADYDAELWQAMEQEKVRQEEHIELIASENYTSPRVMQAQGSQLTNKYAEGYPGKRYYGGCEYVDIVEQLAIDRAKELFGADYANVQPHSGSQANFAVYTALLEPGDTVLGMNLAHGGHLTHGSPVNFSGKLYNIVPYGIDATGHIDYADLEKQAKEHKPKMIIGGFSAYSGVVDWAKMREIADSIGAYLFVDMAHVAGLVAAGVYPNPVPHAHVVTTTTHKTLAGPRGGLILAKGGSEELYKKLNSAVFPGGQGGPLMHVIAGKAVALKEAMEPEFKTYQQQVAKNAKAMVEVFLERGYKVVSGGTDNHLFLVDLVDKNLTGKEADAALGRANITVNKNSVPNDPKSPFVTSGIRVGTPAITRRGFKEVEAKELAGWMCDVLDSINDEAVIERIKGKVLDICARYPVYA.

K54 is modified (N6-acetyllysine). Residues L121 and 125–127 (GHL) contribute to the (6S)-5,6,7,8-tetrahydrofolate site. Position 229 is an N6-(pyridoxal phosphate)lysine (K229). 3 positions are modified to N6-acetyllysine: K250, K285, and K354. Residue 355–357 (SPF) coordinates (6S)-5,6,7,8-tetrahydrofolate. At K375 the chain carries N6-acetyllysine.

It belongs to the SHMT family. As to quaternary structure, homodimer. Pyridoxal 5'-phosphate is required as a cofactor.

The protein resides in the cytoplasm. It carries out the reaction (6R)-5,10-methylene-5,6,7,8-tetrahydrofolate + glycine + H2O = (6S)-5,6,7,8-tetrahydrofolate + L-serine. The protein operates within one-carbon metabolism; tetrahydrofolate interconversion. Its pathway is amino-acid biosynthesis; glycine biosynthesis; glycine from L-serine: step 1/1. In terms of biological role, catalyzes the reversible interconversion of serine and glycine with tetrahydrofolate (THF) serving as the one-carbon carrier. This reaction serves as the major source of one-carbon groups required for the biosynthesis of purines, thymidylate, methionine, and other important biomolecules. Also exhibits THF-independent aldolase activity toward beta-hydroxyamino acids, producing glycine and aldehydes, via a retro-aldol mechanism. The polypeptide is Serine hydroxymethyltransferase (Escherichia coli O157:H7).